Consider the following 874-residue polypeptide: MSIQSIVTKETLKKKDTNIEIQEKNMNDLVESASRVIAPLWPISTFAAHHPWMGLEKQSFEQVANWLKEARNVDIYPSASMIHSAKAKGEIEESFLQIGLSRWLDSQSFHIPRETAERFCQEALKLERLPSSLLSSPELNKLAEEISYINTGSMEDSSMQPISSLIENQKGDNLSDVLNYHIIKWCKLYLDDSGSSWTMPNREKGLYRAWHHLITFDPALSKNERKVLKDWPQDAQGALTKALSELGIPESNRQAYLEGHLLSLPGWAGMIRWRSQQSIKEQALVIEYLAVRISMELAIVKPYLPLKNQKAEKKVSIVPLIASWIYWGDISTREWLQMSATEQSELLAFAYRFDENTRKKLWLEAWEQTHAEQLKKKISSKQRATNDKKRVVAQLAFCIDVRSEPFRRHLEKLGPFETFGIAGFFGLPIATSELGSNNSHPSLPVILKPKHQIKELADENEYKSYEQRKKIDSSVSYTFKTMKKNVLTSMLLPEVSGPLLGLQMITRSFVPRRVGGFIRNLRKNMLQKPNTTFSLNHVHDTKCEIPIGFTKEEKVNYVRQALKMVGLTEKFAPLVVMCGHSSQSTNNPYAAALECGACGGAAGGFNARVFATLCNLPEVREALSAEGIKIPEDTIFAAAEHKTTVDELDWIYVPELSEAAQEAFDNIESVMPNVSQEANRERLTQLPNFKMKIKNPSKEAHRFAEDWSEIRPEWGLARNASFIIGQRELTQDCDLEGRAFLHNYDWKQDENGDILASIIAGPGTVAQWINLQYYASTVAPHYYGSGNKTTQTVTAGLGVMQGNASDLLSGLPWQSVMQSDSETYHSPLRLLIVIQAPTKYIERLLNNDFTFREKVQNGWVRLASVDSEGRWKNW.

Cys-398, Asp-400, His-580, and Cys-595 together coordinate Zn(2+).

Belongs to the inorganic carbon transporter (TC 9.A.2) DabA family. Forms a complex with DabB. It depends on Zn(2+) as a cofactor.

The protein localises to the cell membrane. Part of an energy-coupled inorganic carbon pump. The sequence is that of Probable inorganic carbon transporter subunit DabA from Bacillus cereus (strain AH187).